Reading from the N-terminus, the 54-residue chain is Photosystem II reaction center protein K (54 aa).

Positions 1 to 17 are excised as a propeptide; the sequence is MSFENFAIITLKENVFA. The chain crosses the membrane as a helical span at residues 33–53; that stretch reads LPIIPVLFLLLAFVWQSAVKF.

Belongs to the PsbK family. In terms of assembly, PSII is composed of 1 copy each of membrane proteins PsbA, PsbB, PsbC, PsbD, PsbE, PsbF, PsbH, PsbI, PsbJ, PsbK, PsbL, PsbM, PsbT, PsbY, PsbZ, Psb30/Ycf12, at least 3 peripheral proteins of the oxygen-evolving complex and a large number of cofactors. It forms dimeric complexes.

The protein localises to the plastid. It localises to the chloroplast thylakoid membrane. In terms of biological role, one of the components of the core complex of photosystem II (PSII). PSII is a light-driven water:plastoquinone oxidoreductase that uses light energy to abstract electrons from H(2)O, generating O(2) and a proton gradient subsequently used for ATP formation. It consists of a core antenna complex that captures photons, and an electron transfer chain that converts photonic excitation into a charge separation. The protein is Photosystem II reaction center protein K of Euglena deses.